The sequence spans 143 residues: Endoribonuclease YbeY (143 aa).

Zn(2+) contacts are provided by H111, H115, and D121.

This sequence belongs to the endoribonuclease YbeY family. Zn(2+) serves as cofactor.

It localises to the cytoplasm. In terms of biological role, single strand-specific metallo-endoribonuclease involved in late-stage 70S ribosome quality control and in maturation of the 3' terminus of the 16S rRNA. The polypeptide is Endoribonuclease YbeY (Cytophaga hutchinsonii (strain ATCC 33406 / DSM 1761 / CIP 103989 / NBRC 15051 / NCIMB 9469 / D465)).